Reading from the N-terminus, the 270-residue chain is Formamidopyrimidine-DNA glycosylase (270 aa).

The Schiff-base intermediate with DNA role is filled by proline 2. Catalysis depends on glutamate 3, which acts as the Proton donor. The active-site Proton donor; for beta-elimination activity is lysine 58. 3 residues coordinate DNA: histidine 91, arginine 110, and arginine 151. The segment at 236–270 (FVYGRGGQPCKVCGTELREVKLGQRASVYCPRCQR) adopts an FPG-type zinc-finger fold. Arginine 260 acts as the Proton donor; for delta-elimination activity in catalysis.

It belongs to the FPG family. In terms of assembly, monomer. Requires Zn(2+) as cofactor.

It carries out the reaction Hydrolysis of DNA containing ring-opened 7-methylguanine residues, releasing 2,6-diamino-4-hydroxy-5-(N-methyl)formamidopyrimidine.. The catalysed reaction is 2'-deoxyribonucleotide-(2'-deoxyribose 5'-phosphate)-2'-deoxyribonucleotide-DNA = a 3'-end 2'-deoxyribonucleotide-(2,3-dehydro-2,3-deoxyribose 5'-phosphate)-DNA + a 5'-end 5'-phospho-2'-deoxyribonucleoside-DNA + H(+). Involved in base excision repair of DNA damaged by oxidation or by mutagenic agents. Acts as a DNA glycosylase that recognizes and removes damaged bases. Has a preference for oxidized purines, such as 7,8-dihydro-8-oxoguanine (8-oxoG). Has AP (apurinic/apyrimidinic) lyase activity and introduces nicks in the DNA strand. Cleaves the DNA backbone by beta-delta elimination to generate a single-strand break at the site of the removed base with both 3'- and 5'-phosphates. This chain is Formamidopyrimidine-DNA glycosylase, found in Pseudomonas putida (strain ATCC 700007 / DSM 6899 / JCM 31910 / BCRC 17059 / LMG 24140 / F1).